The chain runs to 3432 residues: Genome polyprotein (3432 aa).

The segment at 2-15 is interaction with host EXOC1; that stretch reads TKKPGGPGKNRAIN. Residues 2–109 are Cytoplasmic-facing; sequence TKKPGGPGKN…RKQNKRGGNE (108 aa). The tract at residues 37–72 is hydrophobic; homodimerization of capsid protein C; the sequence is LLDGRGPVRFVLALITFFKFTALAPTKALLGRWKAV. Residues 106–127 constitute a propeptide, ER anchor for the capsid protein C, removed in mature form by serine protease NS3; that stretch reads GGNEGSIMWLASLAVVIACAGA. Residues 110–130 form a helical membrane-spanning segment; sequence GSIMWLASLAVVIACAGAMKL. The Extracellular portion of the chain corresponds to 131 to 253; sequence SNFQGKLLMT…ATRYLMKTEN (123 aa). N142 carries N-linked (GlcNAc...) asparagine; by host glycosylation. A helical transmembrane segment spans residues 254–274; sequence WIIRNPGYAFLAAVLGWMLGS. Topologically, residues 275 to 279 are cytoplasmic; that stretch reads NNGQR. Residues 280 to 294 traverse the membrane as a helical segment; sequence VVFTILLLLVAPAYS. Residues 295-746 lie on the Extracellular side of the membrane; that stretch reads FNCLGMGNRD…QVFGGAFRTL (452 aa). Disulfide bonds link C297–C324, C354–C410, C354–C415, C368–C399, C386–C410, and C386–C415. The fusion peptide stretch occupies residues 392 to 405; that stretch reads DRGWGNGCGLFGKG. N-linked (GlcNAc...) asparagine; by host glycosylation occurs at N448. 2 disulfides stabilise this stretch: C484–C581 and C598–C629. The chain crosses the membrane as a helical span at residues 747-767; it reads FGGMSWITQGLMGALLLWMGV. Residues 768–773 are Cytoplasmic-facing; it reads NARDRS. The chain crosses the membrane as a helical span at residues 774–794; the sequence is IALAFLATGGVLVFLATNVHA. Residues 795–1219 are Extracellular-facing; sequence DTGCAIDITR…AFAEANSGGD (425 aa). 6 disulfide bridges follow: C798/C809, C849/C937, C973/C1017, C1074/C1123, C1085/C1106, and C1107/C1110. N924 and N1001 each carry an N-linked (GlcNAc...) asparagine; by host glycan. Residues 1220–1240 traverse the membrane as a helical segment; sequence VLHLALIAVFKIQPAFLVMNM. At 1241–1250 the chain is on the cytoplasmic side; it reads LSTRWTNQEN. A helical transmembrane segment spans residues 1251–1271; sequence VVLVLGAAFFQLASVDLQIGV. H1272 is a topological domain (lumenal). The helical transmembrane segment at 1273–1293 threads the bilayer; it reads GILNAAAIAWMIVRAITFPTT. At 1294-1309 the chain is on the cytoplasmic side; sequence SSVTMPVLALLTPGMR. A helical transmembrane segment spans residues 1310-1330; that stretch reads ALYLDTYRIILLVIGICSLLH. The Lumenal portion of the chain corresponds to 1331–1341; that stretch reads ERKKTMAKKKG. The helical transmembrane segment at 1342 to 1362 threads the bilayer; the sequence is AVLLGLALTSTGWFSPTTIAA. Over 1363–1374 the chain is Cytoplasmic; that stretch reads GLMVCNPNKKRG. A helical transmembrane segment spans residues 1375–1395; it reads WPATEFLSAVGLMFAIVGGLA. The Lumenal portion of the chain corresponds to 1396–1398; the sequence is ELD. A helical transmembrane segment spans residues 1399-1419; that stretch reads IESMSIPFMLAGLMAVSYVVS. The Cytoplasmic segment spans residues 1420-1476; the sequence is GKATDMWLERAADISWEMDAAITGSSRRLDVKLDDDGDFHLIDDPGVPWKVWVLRMS. An interacts with and activates NS3 protease region spans residues 1427–1466; it reads LERAADISWEMDAAITGSSRRLDVKLDDDGDFHLIDDPGV. The segment at residues 1477 to 1497 is an intramembrane region (helical); the sequence is CIGLAALTPWAIVPAAFGYWL. Over 1498-2173 the chain is Cytoplasmic; it reads TLKTTKRGGV…RMALEELPDA (676 aa). In terms of domain architecture, Peptidase S7 spans 1505 to 1682; sequence GGVFWDTPSP…DRQEEPVPEA (178 aa). Residues H1555, D1579, and S1639 each act as charge relay system; for serine protease NS3 activity in the active site. In terms of domain architecture, Helicase ATP-binding spans 1685–1841; the sequence is PNMLRKRQMT…DSNAPIHDLQ (157 aa). The important for RNA-binding stretch occupies residues 1689–1692; that stretch reads RKRQ. 1698–1705 serves as a coordination point for ATP; the sequence is LHPGSGKT. A DEAH box motif is present at residues 1789 to 1792; sequence DEAH. Positions 1852–2017 constitute a Helicase C-terminal domain; the sequence is GYEWITEYAG…GLVAQLYGPE (166 aa). K1893 is subject to N6-acetyllysine; by host. Residues 1950–1972 are disordered; sequence NPSPITSASAAQRRGRVGRNPNQ. Residues 2168 to 2172 form a regulates the ATPase activity of NS3 helicase region; the sequence is EELPD. Residues 2174–2194 form a helical membrane-spanning segment; that stretch reads LETITLIVAITVMTGGFFLLM. Topologically, residues 2195–2199 are lumenal; sequence MQRKG. Residues 2200–2220 constitute an intramembrane region (helical); the sequence is IGKMGLGALVLTLATFFLWAA. A topological domain (lumenal) is located at residue E2221. Residues 2222–2242 traverse the membrane as a helical segment; that stretch reads VPGTKIAGTLLIALLLMVVLI. Over 2243–2257 the chain is Cytoplasmic; sequence PEPEKQRSQTDNQLA. Residues 2258–2278 form a helical membrane-spanning segment; the sequence is VFLICVLTVVGVVAANEYGML. Over 2279–2311 the chain is Lumenal; the sequence is EKTKADLKSMFGGKTQASGLTGLPSMALDLRPA. Residues 2312–2332 constitute an intramembrane region (helical); sequence TAWALYGGSTVVLTPLLKHLI. Over 2333 to 2368 the chain is Lumenal; sequence TSEYVTTSLASINSQAGSLFVLPRGVPFTDLDLTVG. A helical membrane pass occupies residues 2369–2389; the sequence is LVFLGCWGQITLTTFLTAMVL. The Cytoplasmic portion of the chain corresponds to 2390-2444; the sequence is ATLHYGYMLPGWQAEALRAAQRRTAAGIMKNAVVDGMVATDVPELERTTPLMQKK. Residues 2445–2465 form a helical membrane-spanning segment; sequence VGQVLLIGVSVAAFLVNPNVT. At 2466 to 2469 the chain is on the lumenal side; it reads TVRE. Residues 2470–2490 traverse the membrane as a helical segment; the sequence is AGVLVTAATLTLWDNGASAVW. Residues 2491–3432 lie on the Cytoplasmic side of the membrane; the sequence is NSTTATGLCH…DVLIQEDRVI (942 aa). In terms of domain architecture, mRNA cap 0-1 NS5-type MT spans 2528–2793; it reads GRPGGRTLGE…DVNLGSGTRA (266 aa). Residue S2583 coordinates S-adenosyl-L-methionine. The residue at position 2583 (S2583) is a Phosphoserine. The For 2'-O-MTase activity role is filled by K2588. S-adenosyl-L-methionine contacts are provided by G2613, W2614, T2631, K2632, D2658, and V2659. The active-site For 2'-O-MTase activity is D2673. I2674 contacts S-adenosyl-L-methionine. Residues K2709 and E2745 each act as for 2'-O-MTase activity in the active site. Y2747 serves as a coordination point for S-adenosyl-L-methionine. Residues E2967, H2971, C2976, and C2979 each coordinate Zn(2+). The 153-residue stretch at 3057 to 3209 folds into the RdRp catalytic domain; the sequence is GKMYADDTAG…KPLDDRFATA (153 aa). Positions 3244, 3260, and 3379 each coordinate Zn(2+).

The protein in the N-terminal section; belongs to the class I-like SAM-binding methyltransferase superfamily. mRNA cap 0-1 NS5-type methyltransferase family. In terms of assembly, homodimer. Interacts (via N-terminus) with host EXOC1 (via C-terminus); this interaction results in EXOC1 degradation through the proteasome degradation pathway. As to quaternary structure, forms heterodimers with envelope protein E in the endoplasmic reticulum and Golgi. Homodimer; in the endoplasmic reticulum and Golgi. Interacts with protein prM. Interacts with non-structural protein 1. Interacts with host HSPA5. In terms of assembly, homodimer; Homohexamer when secreted. Interacts with envelope protein E. NS1 interacts with NS4B. Interacts with host complement protein CFH; this interaction leads to the degradation of C3. As to quaternary structure, interacts (via N-terminus) with serine protease NS3. Forms a heterodimer with serine protease NS3. May form homooligomers. In terms of assembly, forms a heterodimer with NS2B. Interacts with non-structural protein 2A (via N-terminus). Interacts with NS4B. Interacts with unphosphorylated RNA-directed RNA polymerase NS5; this interaction stimulates RNA-directed RNA polymerase NS5 guanylyltransferase activity. Interacts with host ILF2. As to quaternary structure, interacts with serine protease NS3. Homodimer. Interacts with host STAT2; this interaction inhibits the phosphorylation of the latter, and, when all viral proteins are present (polyprotein), targets STAT2 for degradation. Interacts with serine protease NS3. Mn(2+) serves as cofactor. Mg(2+) is required as a cofactor. In terms of processing, specific enzymatic cleavages in vivo yield mature proteins. Cleavages in the lumen of endoplasmic reticulum are performed by host signal peptidase, whereas cleavages in the cytoplasmic side are performed by serine protease NS3. Signal cleavage at the 2K-4B site requires a prior NS3 protease-mediated cleavage at the 4A-2K site. Post-translationally, cleaved in post-Golgi vesicles by a host furin, releasing the mature small envelope protein M, and peptide pr. This cleavage is incomplete as up to 30% of viral particles still carry uncleaved prM. N-glycosylated. In terms of processing, N-glycosylated. The excreted form is glycosylated and this is required for efficient secretion of the protein from infected cells. Post-translationally, acetylated by host KAT5. Acetylation modulates NS3 RNA-binding and unwinding activities and plays an important positive role for viral replication. Phosphorylated on serines residues. This phosphorylation may trigger NS5 nuclear localization.

The protein localises to the virion. It is found in the host nucleus. It localises to the host cytoplasm. Its subcellular location is the host perinuclear region. The protein resides in the secreted. The protein localises to the virion membrane. It is found in the host endoplasmic reticulum membrane. It localises to the host cell surface. It carries out the reaction Selective hydrolysis of -Xaa-Xaa-|-Yaa- bonds in which each of the Xaa can be either Arg or Lys and Yaa can be either Ser or Ala.. The enzyme catalyses RNA(n) + a ribonucleoside 5'-triphosphate = RNA(n+1) + diphosphate. It catalyses the reaction a ribonucleoside 5'-triphosphate + H2O = a ribonucleoside 5'-diphosphate + phosphate + H(+). The catalysed reaction is ATP + H2O = ADP + phosphate + H(+). It carries out the reaction a 5'-end (5'-triphosphoguanosine)-ribonucleoside in mRNA + S-adenosyl-L-methionine = a 5'-end (N(7)-methyl 5'-triphosphoguanosine)-ribonucleoside in mRNA + S-adenosyl-L-homocysteine. The enzyme catalyses a 5'-end (N(7)-methyl 5'-triphosphoguanosine)-ribonucleoside in mRNA + S-adenosyl-L-methionine = a 5'-end (N(7)-methyl 5'-triphosphoguanosine)-(2'-O-methyl-ribonucleoside) in mRNA + S-adenosyl-L-homocysteine + H(+). In terms of biological role, plays a role in virus budding by binding to the cell membrane and gathering the viral RNA into a nucleocapsid that forms the core of a mature virus particle. During virus entry, may induce genome penetration into the host cytoplasm after hemifusion induced by the surface proteins. Can migrate to the cell nucleus where it modulates host functions. Overcomes the anti-viral effects of host EXOC1 by sequestering and degrading the latter through the proteasome degradation pathway. Functionally, inhibits RNA silencing by interfering with host Dicer. Its function is as follows. Prevents premature fusion activity of envelope proteins in trans-Golgi by binding to envelope protein E at pH6.0. After virion release in extracellular space, gets dissociated from E dimers. Acts as a chaperone for envelope protein E during intracellular virion assembly by masking and inactivating envelope protein E fusion peptide. prM is the only viral peptide matured by host furin in the trans-Golgi network probably to avoid catastrophic activation of the viral fusion activity in acidic Golgi compartment prior to virion release. prM-E cleavage is inefficient, and many virions are only partially matured. These uncleaved prM would play a role in immune evasion. In terms of biological role, may play a role in virus budding. Exerts cytotoxic effects by activating a mitochondrial apoptotic pathway through M ectodomain. May display a viroporin activity. Functionally, binds to host cell surface receptor and mediates fusion between viral and cellular membranes. Efficient virus attachment to cell is, at least in part, mediated by host HSPA5. Envelope protein is synthesized in the endoplasmic reticulum in the form of heterodimer with protein prM. They play a role in virion budding in the ER, and the newly formed immature particle is covered with 60 spikes composed of heterodimer between precursor prM and envelope protein E. The virion is transported to the Golgi apparatus where the low pH causes dissociation of PrM-E heterodimers and formation of E homodimers. prM-E cleavage is inefficient, and many virions are only partially matured. These uncleaved prM would play a role in immune evasion. Its function is as follows. Involved in immune evasion, pathogenesis and viral replication. Once cleaved off the polyprotein, is targeted to three destinations: the viral replication cycle, the plasma membrane and the extracellular compartment. Essential for viral replication. Required for formation of the replication complex and recruitment of other non-structural proteins to the ER-derived membrane structures. Excreted as a hexameric lipoparticle that plays a role against host immune response. Antagonizing the complement function. Binds to the host macrophages and dendritic cells. Inhibits signal transduction originating from Toll-like receptor 3 (TLR3). Component of the viral RNA replication complex that functions in virion assembly and antagonizes the host alpha/beta interferon antiviral response. In terms of biological role, required cofactor for the serine protease function of NS3. May have membrane-destabilizing activity and form viroporins. Functionally, displays three enzymatic activities: serine protease, NTPase and RNA helicase. NS3 serine protease, in association with NS2B, performs its autocleavage and cleaves the polyprotein at dibasic sites in the cytoplasm: C-prM, NS2A-NS2B, NS2B-NS3, NS3-NS4A, NS4A-2K and NS4B-NS5. NS3 RNA helicase binds RNA and unwinds dsRNA in the 3' to 5' direction. Its function is as follows. Regulates the ATPase activity of the NS3 helicase activity. NS4A allows NS3 helicase to conserve energy during unwinding. Functions as a signal peptide for NS4B and is required for the interferon antagonism activity of the latter. In terms of biological role, induces the formation of ER-derived membrane vesicles where the viral replication takes place. Inhibits interferon (IFN)-induced host STAT1 phosphorylation and nuclear translocation, thereby preventing the establishment of cellular antiviral state by blocking the IFN-alpha/beta pathway. Inhibits STAT2 translocation in the nucleus after IFN-alpha treatment. Functionally, replicates the viral (+) and (-) RNA genome. Performs the capping of genomes in the cytoplasm. NS5 methylates viral RNA cap at guanine N-7 and ribose 2'-O positions. Besides its role in RNA genome replication, also prevents the establishment of cellular antiviral state by blocking the interferon-alpha/beta (IFN-alpha/beta) signaling pathway. Inhibits host TYK2 and STAT2 phosphorylation, thereby preventing activation of JAK-STAT signaling pathway. The protein is Genome polyprotein of Ardeidae (herons).